The sequence spans 306 residues: Acetyl-coenzyme A carboxylase carboxyl transferase subunit beta (306 aa).

In terms of domain architecture, CoA carboxyltransferase N-terminal spans 25–294 (LWIKDPTSGE…APEPSHAFSK (270 aa)). Residues 287-306 (EPSHAFSKDSQTQISKTKAA) are disordered. Residues 294–306 (KDSQTQISKTKAA) show a composition bias toward polar residues.

Belongs to the AccD/PCCB family. As to quaternary structure, acetyl-CoA carboxylase is a heterohexamer composed of biotin carboxyl carrier protein (AccB), biotin carboxylase (AccC) and two subunits each of ACCase subunit alpha (AccA) and ACCase subunit beta (AccD).

Its subcellular location is the cytoplasm. It carries out the reaction N(6)-carboxybiotinyl-L-lysyl-[protein] + acetyl-CoA = N(6)-biotinyl-L-lysyl-[protein] + malonyl-CoA. It functions in the pathway lipid metabolism; malonyl-CoA biosynthesis; malonyl-CoA from acetyl-CoA: step 1/1. In terms of biological role, component of the acetyl coenzyme A carboxylase (ACC) complex. Biotin carboxylase (BC) catalyzes the carboxylation of biotin on its carrier protein (BCCP) and then the CO(2) group is transferred by the transcarboxylase to acetyl-CoA to form malonyl-CoA. This chain is Acetyl-coenzyme A carboxylase carboxyl transferase subunit beta, found in Bartonella bacilliformis (strain ATCC 35685 / KC583 / Herrer 020/F12,63).